A 1744-amino-acid chain; its full sequence is Retrotransposon-like protein 1 (1744 aa).

Disordered regions lie at residues 1 to 416 (MIEP…SPEE), 823 to 859 (READ…DQSG), and 1287 to 1439 (SSET…EVPS). Residues 19–30 (SSKQMESSEGSS) are compositionally biased toward low complexity. Residues 31-40 (NTVEETPGSS) show a composition bias toward polar residues. The segment covering 41 to 80 (GAQAGAQAGAQAEAQAETQVEAQAEAQAEAQVEAQVEAQA) has biased composition (low complexity). A compositionally biased stretch (polar residues) spans 269–318 (DGSNQESSDGSNHELSNGSNHESSFGSNPESSDVSNLESSGGSNQESSDG). Over residues 332 to 361 (SDNSNQELSDNSNQESSDSSNQSSDISNQE) the composition is skewed to low complexity. 3 stretches are compositionally biased toward acidic residues: residues 385–407 (SDQD…GEEE), 837–846 (GSDDLSESEP), and 1291–1437 (EDKE…DEEV). 2 helical membrane-spanning segments follow: residues 1473–1493 (FFRG…LVML) and 1520–1540 (LILD…AQLL).

In terms of tissue distribution, expressed in placenta and in various tissues in late-fetal stage.

Its subcellular location is the membrane. Plays an essential role in capillaries endothelial cells for the maintenance of feto-maternal interface and for development of the placenta. This Mus musculus (Mouse) protein is Retrotransposon-like protein 1 (Rtl1).